The chain runs to 386 residues: Succinate--CoA ligase [ADP-forming] subunit beta (386 aa).

The ATP-grasp domain occupies 9–244 (KAVLRSYGVS…LDEEDAKEIE (236 aa)). ATP is bound by residues K46, 53-55 (GRG), E99, C102, and E107. 2 residues coordinate Mg(2+): N199 and D213. Substrate-binding positions include N264 and 321 to 323 (GIM).

It belongs to the succinate/malate CoA ligase beta subunit family. Heterotetramer of two alpha and two beta subunits. Mg(2+) serves as cofactor.

The enzyme catalyses succinate + ATP + CoA = succinyl-CoA + ADP + phosphate. It catalyses the reaction GTP + succinate + CoA = succinyl-CoA + GDP + phosphate. Its pathway is carbohydrate metabolism; tricarboxylic acid cycle; succinate from succinyl-CoA (ligase route): step 1/1. Succinyl-CoA synthetase functions in the citric acid cycle (TCA), coupling the hydrolysis of succinyl-CoA to the synthesis of either ATP or GTP and thus represents the only step of substrate-level phosphorylation in the TCA. The beta subunit provides nucleotide specificity of the enzyme and binds the substrate succinate, while the binding sites for coenzyme A and phosphate are found in the alpha subunit. The chain is Succinate--CoA ligase [ADP-forming] subunit beta from Bacillus thuringiensis (strain Al Hakam).